The chain runs to 310 residues: Mitochondrial citrate transporter E (310 aa).

Solcar repeat units lie at residues 2–95, 107–199, and 208–293; these read STTT…LRQG, QSLG…AKRR, and DGPG…TNKI. A run of 6 helical transmembrane segments spans residues 8–28, 72–92, 114–133, 178–198, 211–228, and 265–286; these read FIAG…FETV, GSAY…YEPL, LAGA…FFLV, AMVR…FAKR, GLHL…CCVM, and IYKG…TLSL.

The protein belongs to the mitochondrial carrier (TC 2.A.29) family.

The protein resides in the mitochondrion inner membrane. Mitochondrial transporter that does not mediate citrate export from mitochondria to cytoplasm. Its exact function has still to be determined. The sequence is that of Mitochondrial citrate transporter E from Aspergillus niger (strain ATCC 1015 / CBS 113.46 / FGSC A1144 / LSHB Ac4 / NCTC 3858a / NRRL 328 / USDA 3528.7).